Here is a 414-residue protein sequence, read N- to C-terminus: uncharacterized protein (414 aa).

It belongs to the MG032/MG096/MG288 family.

This is an uncharacterized protein from Mycoplasma genitalium (strain ATCC 33530 / DSM 19775 / NCTC 10195 / G37) (Mycoplasmoides genitalium).